The following is a 216-amino-acid chain: Ras-related protein Rab-5C (216 aa).

Ser30, Ala31, Gly33, Lys34, Ser35, Ser36, His47, Glu48, Thr53, and Gly79 together coordinate GTP. Ser35 lines the Mg(2+) pocket. 2 short sequence motifs (switch) span residues 45 to 57 (QFHE…IGAA) and 78 to 94 (AGQE…YRGA). Thr53 contacts Mg(2+). A Phosphoserine modification is found at Ser85. GTP is bound by residues Asn134, Lys135, Asp137, Ala165, and Lys166. Residues 185–216 (NEPQNAAGAPSRNRGVDLQENSPASRSQCCSN) form a disordered region. Residues 203-216 (QENSPASRSQCCSN) show a composition bias toward polar residues. Residues Cys213 and Cys214 are each lipidated (S-geranylgeranyl cysteine).

It belongs to the small GTPase superfamily. Rab family. In terms of assembly, interacts with EEA1 and INCA1. Interacts with GDI1, GDI2, CHML and CHM; phosphorylation at Ser-85 disrupts this interaction. Mg(2+) serves as cofactor. Phosphorylation of Ser-85 in the switch II region by LRRK2 prevents the association of RAB regulatory proteins, including CHM, CHML and RAB GDP dissociation inhibitors GDI1 and GDI2.

It is found in the cell membrane. Its subcellular location is the early endosome membrane. The protein localises to the melanosome. It catalyses the reaction GTP + H2O = GDP + phosphate + H(+). Its activity is regulated as follows. Regulated by guanine nucleotide exchange factors (GEFs) which promote the exchange of bound GDP for free GTP. Regulated by GTPase activating proteins (GAPs) which increase the GTP hydrolysis activity. Inhibited by GDP dissociation inhibitors (GDIs). The small GTPases Rab are key regulators of intracellular membrane trafficking, from the formation of transport vesicles to their fusion with membranes. Rabs cycle between an inactive GDP-bound form and an active GTP-bound form that is able to recruit to membranes different sets of downstream effectors directly responsible for vesicle formation, movement, tethering and fusion. The sequence is that of Ras-related protein Rab-5C (RAB5C) from Canis lupus familiaris (Dog).